The chain runs to 213 residues: Cytochrome c biogenesis ATP-binding export protein CcmA (213 aa).

Residues 8–213 (LQATALTCER…RDIDLGQWAA (206 aa)) enclose the ABC transporter domain. 40–47 (GPNGSGKT) serves as a coordination point for ATP.

The protein belongs to the ABC transporter superfamily. CcmA exporter (TC 3.A.1.107) family. In terms of assembly, the complex is composed of two ATP-binding proteins (CcmA) and two transmembrane proteins (CcmB).

The protein localises to the cell inner membrane. The enzyme catalyses heme b(in) + ATP + H2O = heme b(out) + ADP + phosphate + H(+). Part of the ABC transporter complex CcmAB involved in the biogenesis of c-type cytochromes; once thought to export heme, this seems not to be the case, but its exact role is uncertain. Responsible for energy coupling to the transport system. This Pseudomonas savastanoi pv. phaseolicola (strain 1448A / Race 6) (Pseudomonas syringae pv. phaseolicola (strain 1448A / Race 6)) protein is Cytochrome c biogenesis ATP-binding export protein CcmA.